A 205-amino-acid chain; its full sequence is Holliday junction branch migration complex subunit RuvA (205 aa).

Residues 1-64 (MIGRLKGILV…EDAQLLYGFI (64 aa)) are domain I. The interval 65–143 (HKEERSLFRL…SLMEASMGAE (79 aa)) is domain II. The interval 144–156 (REFVLKSNFTPAP) is flexible linker. A domain III region spans residues 157 to 205 (VAATVEEDAIAALLSLGYKPQQASKAVSSAFQEGMDPEQLIKAALKSML).

It belongs to the RuvA family. Homotetramer. Forms an RuvA(8)-RuvB(12)-Holliday junction (HJ) complex. HJ DNA is sandwiched between 2 RuvA tetramers; dsDNA enters through RuvA and exits via RuvB. An RuvB hexamer assembles on each DNA strand where it exits the tetramer. Each RuvB hexamer is contacted by two RuvA subunits (via domain III) on 2 adjacent RuvB subunits; this complex drives branch migration. In the full resolvosome a probable DNA-RuvA(4)-RuvB(12)-RuvC(2) complex forms which resolves the HJ.

The protein localises to the cytoplasm. In terms of biological role, the RuvA-RuvB-RuvC complex processes Holliday junction (HJ) DNA during genetic recombination and DNA repair, while the RuvA-RuvB complex plays an important role in the rescue of blocked DNA replication forks via replication fork reversal (RFR). RuvA specifically binds to HJ cruciform DNA, conferring on it an open structure. The RuvB hexamer acts as an ATP-dependent pump, pulling dsDNA into and through the RuvAB complex. HJ branch migration allows RuvC to scan DNA until it finds its consensus sequence, where it cleaves and resolves the cruciform DNA. This Shewanella amazonensis (strain ATCC BAA-1098 / SB2B) protein is Holliday junction branch migration complex subunit RuvA.